The sequence spans 157 residues: MYLDINWEEDSIPENERGSLTGLLEQGIAKAVHLSAESEEAEVSLTLVDDARIHELNRDYRGVDRPTDVLSFALQEERSDEPDILDYEDHLLGDIIISVERARAQAIDYGHSFERELVYLAVHGTLHLLGYDHMEEADKEKMRRQEEAVMSQIGLLR.

3 residues coordinate Zn(2+): H123, H127, and H133.

This sequence belongs to the endoribonuclease YbeY family. The cofactor is Zn(2+).

Its subcellular location is the cytoplasm. In terms of biological role, single strand-specific metallo-endoribonuclease involved in late-stage 70S ribosome quality control and in maturation of the 3' terminus of the 16S rRNA. This is Endoribonuclease YbeY from Desulfitobacterium hafniense (strain Y51).